Reading from the N-terminus, the 402-residue chain is Elongation factor Tu (402 aa).

Positions 10–212 (KPHVNIGTIG…AVDEYIPTPE (203 aa)) constitute a tr-type G domain. The tract at residues 19–26 (GHVDHGKT) is G1. 19-26 (GHVDHGKT) contacts GTP. Thr-26 is a binding site for Mg(2+). The G2 stretch occupies residues 60–64 (GITIA). Residues 81-84 (DCPG) are G3. Residues 81-85 (DCPGH) and 136-139 (NKED) each bind GTP. A G4 region spans residues 136-139 (NKED). A G5 region spans residues 177–179 (SAF).

Belongs to the TRAFAC class translation factor GTPase superfamily. Classic translation factor GTPase family. EF-Tu/EF-1A subfamily. As to quaternary structure, monomer.

Its subcellular location is the cytoplasm. It catalyses the reaction GTP + H2O = GDP + phosphate + H(+). In terms of biological role, GTP hydrolase that promotes the GTP-dependent binding of aminoacyl-tRNA to the A-site of ribosomes during protein biosynthesis. The protein is Elongation factor Tu of Aliarcobacter butzleri (strain RM4018) (Arcobacter butzleri).